A 122-amino-acid chain; its full sequence is Large ribosomal subunit protein uL14 (122 aa).

Belongs to the universal ribosomal protein uL14 family. In terms of assembly, part of the 50S ribosomal subunit. Forms a cluster with proteins L3 and L19. In the 70S ribosome, L14 and L19 interact and together make contacts with the 16S rRNA in bridges B5 and B8.

Its function is as follows. Binds to 23S rRNA. Forms part of two intersubunit bridges in the 70S ribosome. This Xanthomonas axonopodis pv. citri (strain 306) protein is Large ribosomal subunit protein uL14.